Reading from the N-terminus, the 137-residue chain is Large ribosomal subunit protein uL16 (137 aa).

Belongs to the universal ribosomal protein uL16 family. As to quaternary structure, part of the 50S ribosomal subunit.

Functionally, binds 23S rRNA and is also seen to make contacts with the A and possibly P site tRNAs. The sequence is that of Large ribosomal subunit protein uL16 from Oleidesulfovibrio alaskensis (strain ATCC BAA-1058 / DSM 17464 / G20) (Desulfovibrio alaskensis).